Consider the following 289-residue polypeptide: Phytoene synthase (289 aa).

This sequence belongs to the phytoene/squalene synthase family. The cofactor is ATP. Mn(2+) serves as cofactor. Requires Mg(2+) as cofactor.

It functions in the pathway carotenoid biosynthesis; phytoene biosynthesis. In terms of biological role, involved in the biosynthesis of carotenoids. Catalyzes the condensation of two molecules of geranylgeranyl diphosphate (GGPP) to give prephytoene diphosphate (PPPP) and the subsequent rearrangement of the cyclopropylcarbinyl intermediate to yield phytoene. The sequence is that of Phytoene synthase (crtB) from Thermus thermophilus (strain ATCC BAA-163 / DSM 7039 / HB27).